Here is a 763-residue protein sequence, read N- to C-terminus: Pentatricopeptide repeat-containing protein At4g32430, mitochondrial (763 aa).

The N-terminal 38 residues, Met-1–Asn-38, are a transit peptide targeting the mitochondrion. PPR repeat units lie at residues Asp-77 to Ser-109, Phe-110 to Pro-140, Asp-141 to Phe-172, Asp-173 to Ser-207, Asp-208 to Lys-238, Asp-239 to Leu-274, Asp-275 to Ser-309, Leu-310 to Ser-344, Ser-350 to Pro-370, Asn-371 to Ser-405, Glu-406 to Arg-436, Glu-437 to Asn-471, Glu-472 to Ser-507, Cys-508 to Lys-538, Asn-539 to Pro-573, Asp-574 to Val-604, and Ser-610 to Gly-640. A type E motif region spans residues Met-645–Gly-720. The segment at Gly-724–Asn-756 is type E(+) motif.

The protein belongs to the PPR family. PCMP-E subfamily.

It is found in the mitochondrion. In Arabidopsis thaliana (Mouse-ear cress), this protein is Pentatricopeptide repeat-containing protein At4g32430, mitochondrial (PCMP-E40).